Consider the following 1188-residue polypeptide: MAEGGEREELLSPPPISPAKRLCSWPSPQAHHPRGTPGAAGGGAGGGGGGCLAPGARPHLQPESLLDCAAKTVAEKWAYERVEERFERIPEPVQRRIVYWSFPRNEREICMYSSFQYRGGPGAGAAAGAAGASPVEEGPPPPPGAAAPAGSAPGAAGAGSSPGLGAGTGTASGGCGGGEGLPFRRGIRLLDSGSVENVLQVGFHLSGTVTEPAMASEPAVTYKVAISFDRCKITSVSCGCGNKDIFYCAHVVALSLYRIRKPDQVKLRLPISETLFQMNRDQLQKFIQYLITAHHTEVLPTAQKLADEILSSNSEINQVNGAPDPTAGASIDDENCWHLDEEQVKEQVKLFLSQGGYYGSGKQLNSMFAKVREMLRMRDSNGARMLTLITEQFMADPRLTLWRQQGTSMTDKCRQLWDELGALWVCIILNPHCKLEEKSCWLQQLQKWSDLDICPLEDGNYGHELPNITNALSQSASHSPDSLSRPRRTVFTRAIEGRELHWQDSHLQRIISSGIYTAPACQRENERLLFNSHGQPLWLEHVPTACARVDALRSHGYPKEALRLTVAIINTLRLQQQRQLEIYKHQKKELLQRGTTTITNLEGWVGHPLDPIGCLFLTLTEACRLNDDSYMEMSDMNESRLPVYQHVPVASGCPNSNESYLSLALEVALMGMGQQRVMPEGLYAQDKVCRNEEQLLSQLQELQLDDELVQTLRKQCILLLEGGPFSGLGEVIHRESVPMHTFAKYLFSALLPHDPDLSYKLALRAMRLPVLENSSSAGDTSHPHHMVSVVPSRYPRWFTLGHLESQQCELASTMLTAAKGDTLRLRTLLEAIQKHIHSPSLIFKLAQDAFKIATPTDSSTDGTLLNVALELGLQVMRMTLSTLNWRRREMVRWLVTCATEVGVRALVSILQSWYTLFTPTEATSIVAATAVSHTTILRLSLDYPQREELASCARTLALQCAMKDPQSCALSALTLCEKDHIAFEAAYQIAIDAAAGGMTHSQLFTIARYMELRGYPLRAFKLASLAMSHLNLAYNQDTHPAINDVLWACALSHSLGKNELAALIPLVVKSVHCATVLSDILRRCTVTAPGLAGIPGRRSSGKLMSTDKAPLRQLLDATINAYINTTHSRLTHISPRHYGEFIEFLSKARETFLLPQDGHLQFAQFIDNLKQIYKGKKKLMLLVRERFG.

Over residues 1 to 10 (MAEGGEREEL) the composition is skewed to basic and acidic residues. Disordered regions lie at residues 1 to 46 (MAEG…GAGG) and 123 to 171 (AGAA…TGTA). Composition is skewed to low complexity over residues 126-136 (AAGAAGASPVE) and 146-155 (AAPAGSAPGA). Residues 156–171 (AGAGSSPGLGAGTGTA) are compositionally biased toward gly residues. The SWIM-type zinc finger occupies 222–259 (YKVAISFDRCKITSVSCGCGNKDIFYCAHVVALSLYRI).

The polypeptide is Zinc finger SWIM domain-containing protein 5 (Zswim5) (Mus musculus (Mouse)).